The chain runs to 216 residues: MANKRKEFIKLNLNKERKAFIELRGINLELLKEFLSSNVLPLTFIGSLLILILTIVYYFTLSGSVNELKNEISKEKSKKERLLSEIKRLEELKKTLETKKAIYEVVKIYNDMVIKILENPVNLPYGYSLQNFSLCAFRFKNCDIQEKLNKDKSFSLDKPIAQLDLVLFNRKLENYIPPDSIRKFTYVVIDNLPYRRVCIEPDYERLLAEKGHRKEE.

The helical transmembrane segment at 39-59 threads the bilayer; sequence VLPLTFIGSLLILILTIVYYF. A coiled-coil region spans residues 59–108; it reads FTLSGSVNELKNEISKEKSKKERLLSEIKRLEELKKTLETKKAIYEVVKI.

The protein localises to the membrane. This is an uncharacterized protein from Aquifex aeolicus (strain VF5).